The primary structure comprises 1127 residues: Inactive phospholipase C-like protein 2 (1127 aa).

The span at 1–11 (MAECGRGGAAG) shows a compositional bias: gly residues. The disordered stretch occupies residues 1–128 (MAECGRGGAA…KKTVSFSSMP (128 aa)). Ala2 is subject to N-acetylalanine. Residue Ser17 is modified to Phosphoserine. Low complexity predominate over residues 19 to 31 (GPALGAKGALKAG). Residues 32 to 42 (VGEGGGGGGRL) are compositionally biased toward gly residues. Thr84 bears the Phosphothreonine mark. The region spanning 141-251 (NSMVEGSELK…WVTGLRYLIS (111 aa)) is the PH domain. The PI-PLC X-box domain maps to 426–570 (QDMKQPLSHY…LKGKILIKAK (145 aa)). A Phosphothreonine modification is found at Thr584. Residues 618–734 (LSELVSICKS…GYVLRPAIMR (117 aa)) form the PI-PLC Y-box domain. Residues 734 to 863 (REEVSFFSAN…TGYRHVPLQS (130 aa)) enclose the C2 domain. The segment at 1101–1127 (GTENADVQKPRRSLEVIPEKANDETGE) is disordered. Over residues 1106-1127 (DVQKPRRSLEVIPEKANDETGE) the composition is skewed to basic and acidic residues. At Ser1113 the chain carries Phosphoserine.

It localises to the cytoplasm. Functionally, may play an role in the regulation of Ins(1,4,5)P3 around the endoplasmic reticulum. The protein is Inactive phospholipase C-like protein 2 (PLCL2) of Homo sapiens (Human).